The sequence spans 103 residues: UPF0145 protein BCE33L0904 (103 aa).

It belongs to the UPF0145 family.

The protein is UPF0145 protein BCE33L0904 of Bacillus cereus (strain ZK / E33L).